The sequence spans 114 residues: LQDIINEFGGAMPQTFGVPVEEIVRGIKMGVRKVNIDTDCRMRMTGQFRRIAEQNKAEFDPRKFLKPAMDAMRDLCKARLEAFGTAGHASKIKVIPMDDMAKRYASGSLAPKTN.

Residue 35-38 (NIDT) participates in dihydroxyacetone phosphate binding.

This sequence belongs to the class II fructose-bisphosphate aldolase family. Homodimer. Zn(2+) is required as a cofactor.

It catalyses the reaction beta-D-fructose 1,6-bisphosphate = D-glyceraldehyde 3-phosphate + dihydroxyacetone phosphate. The protein operates within carbohydrate biosynthesis; Calvin cycle. It participates in carbohydrate degradation; glycolysis; D-glyceraldehyde 3-phosphate and glycerone phosphate from D-glucose: step 4/4. In terms of biological role, catalyzes the aldol condensation of dihydroxyacetone phosphate (DHAP or glycerone-phosphate) with glyceraldehyde 3-phosphate (G3P) to form fructose 1,6-bisphosphate (FBP) in gluconeogenesis and the reverse reaction in glycolysis. The protein is Fructose-bisphosphate aldolase 2 (cbbA) of Rhodobacter capsulatus (Rhodopseudomonas capsulata).